A 44-amino-acid chain; its full sequence is Antibacterial protein 3 homolog (44 aa).

This sequence belongs to the staphylococcal hemolytic protein family.

It localises to the secreted. Functionally, has hemolytic activity and also inhibits the growth of gonococci. The polypeptide is Antibacterial protein 3 homolog (Staphylococcus haemolyticus (strain JCSC1435)).